The chain runs to 193 residues: Recombination protein RecR (193 aa).

The C4-type zinc finger occupies 61-76 (CTSCNALSESEVCEIC). One can recognise a Toprim domain in the interval 84-170 (SQLCMVLHPR…TFTKIAQGVP (87 aa)).

Belongs to the RecR family.

Its function is as follows. May play a role in DNA repair. It seems to be involved in an RecBC-independent recombinational process of DNA repair. It may act with RecF and RecO. This is Recombination protein RecR from Helicobacter pylori (strain HPAG1).